A 104-amino-acid polypeptide reads, in one-letter code: Large ribosomal subunit protein uL24 (104 aa).

It belongs to the universal ribosomal protein uL24 family. In terms of assembly, part of the 50S ribosomal subunit. Post-translationally, a methylated and unmethylated form are thought to exist.

Its function is as follows. One of two assembly initiator proteins, it binds directly to the 5'-end of the 23S rRNA, where it nucleates assembly of the 50S subunit. Functionally, one of the proteins that surrounds the polypeptide exit tunnel on the outside of the subunit. This Rhodopseudomonas palustris (strain ATCC BAA-98 / CGA009) protein is Large ribosomal subunit protein uL24.